A 362-amino-acid chain; its full sequence is Porin Omp2b (362 aa).

Residues 1–22 (MNIKSLLLGSAAALVAASGAQA) form the signal peptide.

Belongs to the alphaproteobacteria porin family. Homotrimer.

The protein resides in the cell outer membrane. In terms of biological role, forms passive diffusion pores that allow small molecular weight hydrophilic materials across the outer membrane. The chain is Porin Omp2b (omp2b) from Brucella neotomae.